The following is a 253-amino-acid chain: 5'/3'-nucleotidase SurE (253 aa).

4 residues coordinate a divalent metal cation: aspartate 8, aspartate 9, serine 39, and asparagine 92.

This sequence belongs to the SurE nucleotidase family. A divalent metal cation serves as cofactor.

It localises to the cytoplasm. The enzyme catalyses a ribonucleoside 5'-phosphate + H2O = a ribonucleoside + phosphate. It catalyses the reaction a ribonucleoside 3'-phosphate + H2O = a ribonucleoside + phosphate. The catalysed reaction is [phosphate](n) + H2O = [phosphate](n-1) + phosphate + H(+). Functionally, nucleotidase with a broad substrate specificity as it can dephosphorylate various ribo- and deoxyribonucleoside 5'-monophosphates and ribonucleoside 3'-monophosphates with highest affinity to 3'-AMP. Also hydrolyzes polyphosphate (exopolyphosphatase activity) with the preference for short-chain-length substrates (P20-25). Might be involved in the regulation of dNTP and NTP pools, and in the turnover of 3'-mononucleotides produced by numerous intracellular RNases (T1, T2, and F) during the degradation of various RNAs. This is 5'/3'-nucleotidase SurE from Serratia proteamaculans (strain 568).